The sequence spans 97 residues: MAATLPVFAVVFFAMVLASSQANECVSKGFGCLPQSDCPQEARLSYGGCSTVCCDLSKLTGCKGKGGECNPLDRQCKELQAESASCGKGQKCCVWLH.

Positions 1–22 (MAATLPVFAVVFFAMVLASSQA) are cleaved as a signal peptide.

Its subcellular location is the secreted. Functionally, potent competitive inhibitor of metallo-carboxypeptidases CPA1, CPA2, CPB, CPN, and TAF1a. Also inhibits human CPA4. Accelerates fibrinolysis in vitro and may contribute to the maintenance of host blood liquidity during feeding. The protein is Carboxypeptidase inhibitor of Rhipicephalus bursa (Tick).